The chain runs to 359 residues: MLENRVKTKQIFIGGVAIGGDAPISTQSMTFSKTADIESTKNQIDRLKLAGADLVRVAVSNEKDALALKELKRVSPLPLIADIHFHYKFALIAAQSVDAIRINPGNIGSKDKIKAVVDACKEKNIPIRIGVNAGSLEKQFDQKYGPTPKGMVESALYNAKLLEDLDFTDFKISLKASDVIRTIEAYRMLRPLVIYPFHLGVTEAGNLFSSSIKSAMALGGLLMEGIGDTMRVSITGELENEIKVARAILRHSGRLKEGINLISCPTCGRIEANLVDMASKVEKRLSHIKTPLDISVMGCVVNALGEAKHADMAIAFGNRSGLIIKEGKVIHKLAEKDLFETFVIEVENLAKEREKSLKD.

Positions 264, 267, 299, and 306 each coordinate [4Fe-4S] cluster.

Belongs to the IspG family. [4Fe-4S] cluster is required as a cofactor.

The catalysed reaction is (2E)-4-hydroxy-3-methylbut-2-enyl diphosphate + oxidized [flavodoxin] + H2O + 2 H(+) = 2-C-methyl-D-erythritol 2,4-cyclic diphosphate + reduced [flavodoxin]. It participates in isoprenoid biosynthesis; isopentenyl diphosphate biosynthesis via DXP pathway; isopentenyl diphosphate from 1-deoxy-D-xylulose 5-phosphate: step 5/6. Functionally, converts 2C-methyl-D-erythritol 2,4-cyclodiphosphate (ME-2,4cPP) into 1-hydroxy-2-methyl-2-(E)-butenyl 4-diphosphate. This Helicobacter pylori (strain Shi470) protein is 4-hydroxy-3-methylbut-2-en-1-yl diphosphate synthase (flavodoxin).